A 732-amino-acid chain; its full sequence is Photosystem I P700 chlorophyll a apoprotein A1 (732 aa).

8 helical membrane passes run 61 to 84 (VFSS…FHGA), 145 to 168 (LKYA…FHMH), 185 to 209 (NAGQ…HIAL), 278 to 296 (IASH…GIIA), 317 to 340 (WHSR…HHIY), 356 to 382 (LSLF…IFMI), 414 to 436 (IIMG…IYIH), and 510 to 528 (FMVH…LILM). The [4Fe-4S] cluster site is built by cysteine 552 and cysteine 561. 2 helical membrane passes run 568 to 589 (HVFL…HFFW) and 644 to 666 (LSGY…MFLW). Histidine 655 is a chlorophyll a' binding site. 2 residues coordinate chlorophyll a: methionine 663 and tyrosine 671. Tryptophan 672 serves as a coordination point for phylloquinone. A helical transmembrane segment spans residues 704 to 724 (AVGLVHYMLGGIGTTWAFFLA).

It belongs to the PsaA/PsaB family. In terms of assembly, the PsaA/B heterodimer binds the P700 chlorophyll special pair and subsequent electron acceptors. PSI consists of a core antenna complex that captures photons, and an electron transfer chain that converts photonic excitation into a charge separation. The eukaryotic PSI reaction center is composed of at least 11 subunits. The cofactor is P700 is a chlorophyll a/chlorophyll a' dimer, A0 is one or more chlorophyll a, A1 is one or both phylloquinones and FX is a shared 4Fe-4S iron-sulfur center..

It localises to the plastid. It is found in the chloroplast thylakoid membrane. It catalyses the reaction reduced [plastocyanin] + hnu + oxidized [2Fe-2S]-[ferredoxin] = oxidized [plastocyanin] + reduced [2Fe-2S]-[ferredoxin]. PsaA and PsaB bind P700, the primary electron donor of photosystem I (PSI), as well as the electron acceptors A0, A1 and FX. PSI is a plastocyanin/cytochrome c6-ferredoxin oxidoreductase, converting photonic excitation into a charge separation, which transfers an electron from the donor P700 chlorophyll pair to the spectroscopically characterized acceptors A0, A1, FX, FA and FB in turn. Oxidized P700 is reduced on the lumenal side of the thylakoid membrane by plastocyanin or cytochrome c6. The chain is Photosystem I P700 chlorophyll a apoprotein A1 from Heterocapsa triquetra (Dinoflagellate).